Consider the following 603-residue polypeptide: Arginine--tRNA ligase (603 aa).

The 'HIGH' region signature appears at 143 to 153 (PNIAKEMHVGH).

It belongs to the class-I aminoacyl-tRNA synthetase family. Monomer.

The protein localises to the cytoplasm. The enzyme catalyses tRNA(Arg) + L-arginine + ATP = L-arginyl-tRNA(Arg) + AMP + diphosphate. The sequence is that of Arginine--tRNA ligase from Prochlorococcus marinus (strain MIT 9211).